The following is a 551-amino-acid chain: E-selectin (551 aa).

The N-terminal stretch at methionine 1–threonine 23 is a signal peptide. One can recognise a C-type lectin domain in the interval tryptophan 24–tyrosine 141. At tryptophan 24–proline 495 the chain is on the extracellular side. N-linked (GlcNAc...) asparagine glycosylation is found at asparagine 32 and asparagine 45. 17 cysteine pairs are disulfide-bonded: cysteine 42-cysteine 140, cysteine 113-cysteine 132, cysteine 145-cysteine 156, cysteine 150-cysteine 165, cysteine 167-cysteine 176, cysteine 182-cysteine 226, cysteine 195-cysteine 208, cysteine 212-cysteine 239, cysteine 244-cysteine 288, cysteine 257-cysteine 270, cysteine 274-cysteine 301, cysteine 306-cysteine 351, cysteine 337-cysteine 364, cysteine 369-cysteine 414, cysteine 400-cysteine 427, cysteine 432-cysteine 473, and cysteine 459-cysteine 486. The Ca(2+) site is built by glutamate 103, asparagine 105, and glutamate 111. A carbohydrate is bound by residues glutamate 103–glutamate 111, glutamate 115–arginine 120, and asparagine 128–glutamate 130. 2 residues coordinate Ca(2+): asparagine 128 and aspartate 129. The EGF-like domain occupies threonine 142 to glutamate 177. N-linked (GlcNAc...) asparagine glycosylation occurs at asparagine 162. 5 consecutive Sushi domains span residues valine 180 to valine 241, valine 242 to alanine 303, serine 305 to alanine 366, lysine 368 to valine 429, and valine 430 to glutamate 488. Residues asparagine 194, asparagine 201, and asparagine 205 are each glycosylated (N-linked (GlcNAc...) asparagine). The N-linked (GlcNAc...) asparagine glycan is linked to asparagine 267. N-linked (GlcNAc...) asparagine glycans are attached at residues asparagine 314, asparagine 321, and asparagine 334. Asparagine 442 and asparagine 466 each carry an N-linked (GlcNAc...) asparagine glycan. A helical transmembrane segment spans residues leucine 496–phenylalanine 517. Residues leucine 518–isoleucine 551 lie on the Cytoplasmic side of the membrane.

It belongs to the selectin/LECAM family. As to quaternary structure, interacts with SELPLG/PSGL1 and PODXL2 through the sialyl Lewis X epitope. SELPLG sulfation appears not to be required for this interaction.

It is found in the cell membrane. Its function is as follows. Cell-surface glycoprotein having a role in immunoadhesion. Mediates in the adhesion of blood neutrophils in cytokine-activated endothelium through interaction with SELPLG/PSGL1. May have a role in capillary morphogenesis. In Oryctolagus cuniculus (Rabbit), this protein is E-selectin (SELE).